The chain runs to 483 residues: MSGHKCSYPWDLQDRYAQDKSVVNKMQQKYWETKQAFIKATGKKEDEHVVASDADLDAKLELFHSIQRTCLDLSKAIVLYQKRICFLSQEENELGKFLRSQGFQDKTRAGKMMQATGKALCFSSQQRLALRNPLCRFHQEVETFRHRAISDTWLTVNRMEQCRTEYRGALLWMKDVSQELDPDLYKQMEKFRKVQTQVRLAKKNFDKLKMDVCQKVDLLGASRCNLLSHMLATYQTTLLHFWEKTSHTMAAIHESFKGYQPYEFTTLKSLQDPMKKLVEKEEKKKINQQESTDAAVQEPSQLISLEEENQRKESSSFKTEDGKSILSALDKGSTHTACSGPIDELLDMKSEEGACLGPVAGTPEPEGADKDDLLLLSEIFNASSLEEGEFSKEWAAVFGDGQVKEPVPTMALGEPDPKAQTGSGFLPSQLLDQNMKDLQASLQEPAKAASDLTAWFSLFADLDPLSNPDAVGKTDKEHELLNA.

The AH domain occupies 51–254; sequence ASDADLDAKL…TSHTMAAIHE (204 aa). The segment at 281 to 321 is disordered; sequence EEKKKINQQESTDAAVQEPSQLISLEEENQRKESSSFKTED. Residues 288-303 show a composition bias toward polar residues; the sequence is QQESTDAAVQEPSQLI. Basic and acidic residues predominate over residues 308–321; sequence ENQRKESSSFKTED.

In terms of tissue distribution, expressed abundantly in pancreas, heart and brain with low levels of expression in lung, kidney, liver and thyroid.

It localises to the cytoplasm. The protein resides in the cytosol. It is found in the golgi apparatus membrane. Its subcellular location is the cytoplasmic vesicle. The protein localises to the secretory vesicle membrane. It localises to the secretory vesicle. The protein resides in the synaptic vesicle membrane. Its function is as follows. May play a role in neurotransmitter secretion. The sequence is that of Islet cell autoantigen 1 (ICA1) from Homo sapiens (Human).